A 74-amino-acid polypeptide reads, in one-letter code: Salivary glue protein Sgs-7 (74 aa).

An N-terminal signal peptide occupies residues 1–23 (MKLIAVTIIACILLIGFSDLALG).

This Drosophila melanogaster (Fruit fly) protein is Salivary glue protein Sgs-7 (Sgs7).